A 241-amino-acid chain; its full sequence is Uridylate kinase (241 aa).

An ATP-binding site is contributed by 14 to 17 (KLSG). Glycine 56 serves as a coordination point for UMP. ATP is bound by residues glycine 57 and arginine 61. Residues aspartate 77 and 138–145 (TGNPFFTT) each bind UMP. Positions 165, 171, and 174 each coordinate ATP.

It belongs to the UMP kinase family. As to quaternary structure, homohexamer.

The protein resides in the cytoplasm. The enzyme catalyses UMP + ATP = UDP + ADP. The protein operates within pyrimidine metabolism; CTP biosynthesis via de novo pathway; UDP from UMP (UMPK route): step 1/1. Its activity is regulated as follows. Inhibited by UTP. Functionally, catalyzes the reversible phosphorylation of UMP to UDP. The sequence is that of Uridylate kinase from Psychrobacter arcticus (strain DSM 17307 / VKM B-2377 / 273-4).